We begin with the raw amino-acid sequence, 334 residues long: Formamidase (334 aa).

The CN hydrolase domain occupies 14–260 (FLVAAIQFPV…WEIVTGEIYP (247 aa)). The Proton acceptor role is filled by Glu60. Lys133 serves as the catalytic Proton donor. Cys166 acts as the Nucleophile in catalysis.

This sequence belongs to the carbon-nitrogen hydrolase superfamily. Aliphatic amidase family.

It catalyses the reaction formamide + H2O = formate + NH4(+). Its function is as follows. Is an aliphatic amidase with a restricted substrate specificity, as it only hydrolyzes formamide. The chain is Formamidase from Helicobacter pylori (strain G27).